An 89-amino-acid polypeptide reads, in one-letter code: UPF0367 protein CYB_2632 (89 aa).

The tract at residues 69 to 89 (SKSGSASPMGTRPGFLAQLQS) is disordered.

Belongs to the UPF0367 family.

The polypeptide is UPF0367 protein CYB_2632 (Synechococcus sp. (strain JA-2-3B'a(2-13)) (Cyanobacteria bacterium Yellowstone B-Prime)).